Consider the following 172-residue polypeptide: Ribosome maturation factor RimM (172 aa).

The 73-residue stretch at 96-168 folds into the PRC barrel domain; that stretch reads EGEFYYHQII…RVDVELMEGL (73 aa).

The protein belongs to the RimM family. In terms of assembly, binds ribosomal protein uS19.

Its subcellular location is the cytoplasm. An accessory protein needed during the final step in the assembly of 30S ribosomal subunit, possibly for assembly of the head region. Essential for efficient processing of 16S rRNA. May be needed both before and after RbfA during the maturation of 16S rRNA. It has affinity for free ribosomal 30S subunits but not for 70S ribosomes. The chain is Ribosome maturation factor RimM from Streptococcus pyogenes serotype M1.